The following is a 141-amino-acid chain: MIKKIITTVKLALPAGKATPAPPVGPALGQHGVNIMMFVKEYNARTEEQKGSIIPAEIQIYEDKSFTFILKTPPASILLKQATGIEKATKAPRREQVGSISYKEIQNIAKIKINELNTKDLSKAIKIIEGTAKNMGISVET.

It belongs to the universal ribosomal protein uL11 family. In terms of assembly, part of the ribosomal stalk of the 50S ribosomal subunit. Interacts with L10 and the large rRNA to form the base of the stalk. L10 forms an elongated spine to which L12 dimers bind in a sequential fashion forming a multimeric L10(L12)X complex.

Its subcellular location is the plastid. The protein localises to the chloroplast. Forms part of the ribosomal stalk which helps the ribosome interact with GTP-bound translation factors. The polypeptide is Large ribosomal subunit protein uL11c (Cyanidium caldarium (Red alga)).